Reading from the N-terminus, the 108-residue chain is Thioredoxin Asp f 28 (108 aa).

Positions 1–108 (MSHGKVIAVD…LEEMIKSISA (108 aa)) constitute a Thioredoxin domain. Active-site nucleophile residues include Cys33 and Cys36. Cys33 and Cys36 are joined by a disulfide.

It belongs to the thioredoxin family.

Its function is as follows. Participates in various redox reactions through the reversible oxidation of its active center dithiol to a disulfide and catalyzes dithiol-disulfide exchange reactions. The polypeptide is Thioredoxin Asp f 28 (Aspergillus fumigatus (Neosartorya fumigata)).